A 391-amino-acid chain; its full sequence is Glutamate 5-kinase (391 aa).

An ATP-binding site is contributed by K17. Positions 57, 144, and 156 each coordinate substrate. Residues 176–177 (SD) and 216–222 (TGGMTTK) each bind ATP. Positions 278 to 356 (QGQIVIDDGA…AWLAAEMGPA (79 aa)) constitute a PUA domain. The interval 370–391 (SRRRKAEPSSRNQKSSGSRVTS) is disordered. A compositionally biased stretch (polar residues) spans 378 to 391 (SSRNQKSSGSRVTS).

This sequence belongs to the glutamate 5-kinase family.

The protein localises to the cytoplasm. The enzyme catalyses L-glutamate + ATP = L-glutamyl 5-phosphate + ADP. Its pathway is amino-acid biosynthesis; L-proline biosynthesis; L-glutamate 5-semialdehyde from L-glutamate: step 1/2. Its function is as follows. Catalyzes the transfer of a phosphate group to glutamate to form L-glutamate 5-phosphate. The sequence is that of Glutamate 5-kinase from Cutibacterium acnes (strain DSM 16379 / KPA171202) (Propionibacterium acnes).